The sequence spans 147 residues: Histone H2B (147 aa).

Over residues 1 to 31 the composition is skewed to basic and acidic residues; that stretch reads MAPKAEKKPAEKKPAEEKKAVAEKAPAEKKP. The segment at 1–55 is disordered; sequence MAPKAEKKPAEKKPAEEKKAVAEKAPAEKKPKAGKKLPKEGGAAAGDKKKKRVKK. An N6-acetyllysine mark is found at Lys7, Lys35, and Lys36. Residue Lys143 forms a Glycyl lysine isopeptide (Lys-Gly) (interchain with G-Cter in ubiquitin) linkage.

Belongs to the histone H2B family. As to quaternary structure, the nucleosome is a histone octamer containing two molecules each of H2A, H2B, H3 and H4 assembled in one H3-H4 heterotetramer and two H2A-H2B heterodimers. The octamer wraps approximately 147 bp of DNA. Post-translationally, can be acetylated to form H2BK6ac, H2BK33ac and H2BK34ac. Monoubiquitinated to form H2BK143ub1; may give a specific tag for epigenetic transcriptional activation.

The protein localises to the nucleus. Its subcellular location is the chromosome. Functionally, core component of nucleosome. Nucleosomes wrap and compact DNA into chromatin, limiting DNA accessibility to the cellular machineries which require DNA as a template. Histones thereby play a central role in transcription regulation, DNA repair, DNA replication and chromosomal stability. DNA accessibility is regulated via a complex set of post-translational modifications of histones, also called histone code, and nucleosome remodeling. In Gossypium hirsutum (Upland cotton), this protein is Histone H2B (HIS2B).